We begin with the raw amino-acid sequence, 373 residues long: Nodulation protein NolL (373 aa).

Transmembrane regions (helical) follow at residues 27–47 (DFAK…QYLI), 62–82 (SIYM…SSGA), 98–118 (QLLL…SAVI), 140–160 (WFIW…TFNR), 164–184 (WIIS…SITP), 212–232 (RYKW…FLGW), 253–273 (QVFL…QSMF), 286–306 (RFVA…QGAV), and 324–344 (RITF…AIRS).

It belongs to the acyltransferase 3 family.

The protein localises to the cell membrane. Its function is as follows. Thought to be an acetyltransferase that modifies the fucose of the nod factor. This chain is Nodulation protein NolL (nolL), found in Mesorhizobium japonicum (strain LMG 29417 / CECT 9101 / MAFF 303099) (Mesorhizobium loti (strain MAFF 303099)).